A 451-amino-acid chain; its full sequence is AAA-ATPase At3g28570, mitochondrial (451 aa).

A mitochondrion-targeting transit peptide spans 1–48 (MFAENLTRIGSNVAGLFFVWSTLKRYFPRQIQQLLFNAIQRIPIFKRL). 243–250 (GPPGTGKS) is an ATP binding site.

Belongs to the AAA ATPase family. BCS1 subfamily. The cofactor is Mg(2+).

It localises to the mitochondrion. The catalysed reaction is ATP + H2O = ADP + phosphate + H(+). This chain is AAA-ATPase At3g28570, mitochondrial, found in Arabidopsis thaliana (Mouse-ear cress).